A 91-amino-acid polypeptide reads, in one-letter code: PqqA binding protein (91 aa).

It belongs to the PqqD family. As to quaternary structure, monomer. Interacts with PqqE.

It participates in cofactor biosynthesis; pyrroloquinoline quinone biosynthesis. Functions as a PqqA binding protein and presents PqqA to PqqE, in the pyrroloquinoline quinone (PQQ) biosynthetic pathway. The chain is PqqA binding protein from Pseudomonas entomophila (strain L48).